A 207-amino-acid chain; its full sequence is dTTP/UTP pyrophosphatase (207 aa).

The active-site Proton acceptor is D79.

Belongs to the Maf family. YhdE subfamily. A divalent metal cation is required as a cofactor.

Its subcellular location is the cytoplasm. The enzyme catalyses dTTP + H2O = dTMP + diphosphate + H(+). It carries out the reaction UTP + H2O = UMP + diphosphate + H(+). Functionally, nucleoside triphosphate pyrophosphatase that hydrolyzes dTTP and UTP. May have a dual role in cell division arrest and in preventing the incorporation of modified nucleotides into cellular nucleic acids. The sequence is that of dTTP/UTP pyrophosphatase from Rhodopseudomonas palustris (strain BisB18).